We begin with the raw amino-acid sequence, 523 residues long: 2-isopropylmalate synthase (523 aa).

The Pyruvate carboxyltransferase domain occupies 5–267 (VIIFDTTLRD…ETGINAKEIH (263 aa)). Residues Asp-14, His-202, His-204, and Asn-238 each coordinate Mn(2+). A regulatory domain region spans residues 392-523 (QLKQLVVHSD…QQKARSLGGV (132 aa)).

The protein belongs to the alpha-IPM synthase/homocitrate synthase family. LeuA type 1 subfamily. As to quaternary structure, homodimer. Mn(2+) serves as cofactor.

It is found in the cytoplasm. It catalyses the reaction 3-methyl-2-oxobutanoate + acetyl-CoA + H2O = (2S)-2-isopropylmalate + CoA + H(+). Its pathway is amino-acid biosynthesis; L-leucine biosynthesis; L-leucine from 3-methyl-2-oxobutanoate: step 1/4. Functionally, catalyzes the condensation of the acetyl group of acetyl-CoA with 3-methyl-2-oxobutanoate (2-ketoisovalerate) to form 3-carboxy-3-hydroxy-4-methylpentanoate (2-isopropylmalate). The polypeptide is 2-isopropylmalate synthase (Shewanella woodyi (strain ATCC 51908 / MS32)).